Consider the following 292-residue polypeptide: UPF0749 protein Mb1856 (292 aa).

The N-terminal stretch at 1–28 (MSENRPEPVAAETSAATTARHSQADAGA) is a signal peptide. The disordered stretch occupies residues 1 to 30 (MSENRPEPVAAETSAATTARHSQADAGAHD). 3 helical membrane passes run 68–88 (VFGT…VTQV), 152–172 (AALS…MITI), and 229–249 (VLSP…AAAM).

It belongs to the UPF0749 family.

It localises to the cell membrane. This Mycobacterium bovis (strain ATCC BAA-935 / AF2122/97) protein is UPF0749 protein Mb1856.